Here is a 274-residue protein sequence, read N- to C-terminus: Rhamnulose-1-phosphate aldolase (274 aa).

The active site involves E117. Zn(2+)-binding residues include H141, H143, and H212.

This sequence belongs to the aldolase class II family. RhaD subfamily. As to quaternary structure, homotetramer. Zn(2+) serves as cofactor.

It localises to the cytoplasm. It catalyses the reaction L-rhamnulose 1-phosphate = (S)-lactaldehyde + dihydroxyacetone phosphate. The protein operates within carbohydrate degradation; L-rhamnose degradation; glycerone phosphate from L-rhamnose: step 3/3. In terms of biological role, catalyzes the reversible cleavage of L-rhamnulose-1-phosphate to dihydroxyacetone phosphate (DHAP) and L-lactaldehyde. This chain is Rhamnulose-1-phosphate aldolase, found in Escherichia fergusonii (strain ATCC 35469 / DSM 13698 / CCUG 18766 / IAM 14443 / JCM 21226 / LMG 7866 / NBRC 102419 / NCTC 12128 / CDC 0568-73).